Reading from the N-terminus, the 280-residue chain is Hematopoietically-expressed homeobox protein HHEX homolog (280 aa).

Disordered stretches follow at residues 1 to 35 (MSTLQYPGPPPPSSMNLHNPHMNHHHGLVGPGLAP) and 221 to 280 (RRVK…EKEA). The homeobox DNA-binding region spans 165–224 (RKGGQVRFSNDQTMELEKKFESQKYLSPPERKKLAKLLQLSERQVKTWFQNRRAKWRRVK). Basic and acidic residues predominate over residues 232 to 252 (GEGDENSHEKPRDLDRDDFSR).

The protein resides in the nucleus. Its function is as follows. Transcription factor that may play a central role in activating or maintaining gene expression in the vegetal pole. Part of a gene regulatory circuit with Erg and Tgif that operates early in mesoderm development. This is Hematopoietically-expressed homeobox protein HHEX homolog from Patiria miniata (Bat star).